The following is a 369-amino-acid chain: Forkhead box protein I2-A (369 aa).

The segment at residues 124 to 218 (RPPYSYSSLI…DNGNFRRKRK (95 aa)) is a DNA-binding region (fork-head). The tract at residues 215-252 (RKRKRKSESVGAGFDEDSNEDKKPLALKSLGSDSPQGA) is disordered.

As to expression, localized to the animal hemisphere of early cleavage stage embryos. Zygotic expression is restricted to the dorsal part of the epibranchial placodes of the head within a region located near the tip of the first, second and third visceral pouch.

Its subcellular location is the nucleus. Its function is as follows. Possible transcriptional activator. The sequence is that of Forkhead box protein I2-A (foxi2-a) from Xenopus laevis (African clawed frog).